The chain runs to 575 residues: G2/mitotic-specific cyclin-B3 (575 aa).

Positions Arg75 to Asn83 match the D-box motif. Ser215 is modified (phosphoserine).

It belongs to the cyclin family. Cyclin AB subfamily. Interacts with Cdk1 kinase. Post-translationally, ubiquitinated. Ubiquitination leads to its degradation in early anaphase. As to expression, in embryo, it is expressed in all mitotically proliferating cells, with a high level in neuroblasts. Not expressed in old embryos and thereafter. Not expressed in endoreplicating tissues.

Its subcellular location is the nucleus. In terms of biological role, cyclins are positive regulatory subunits of the cyclin-dependent kinases (CDKs), and thereby play an essential role in the control of the cell cycle, notably via their destruction during cell division. Probably functions redundantly with other cyclins in regulation of cell cycle. Its presence may be required to delay a deadline for completing cytokinesis that is ordinary imposed by nuclear envelope reformation. Degradation of CycB and CycB3 promote cytokinesis furrow initiation and ingression. Required with CycB for female fertility. The chain is G2/mitotic-specific cyclin-B3 (CycB3) from Drosophila melanogaster (Fruit fly).